Consider the following 152-residue polypeptide: Deoxyuridine 5'-triphosphate nucleotidohydrolase (152 aa).

Substrate is bound by residues 71-73, N84, and 88-90; these read RSG and TID.

The protein belongs to the dUTPase family. Mg(2+) serves as cofactor.

The enzyme catalyses dUTP + H2O = dUMP + diphosphate + H(+). The protein operates within pyrimidine metabolism; dUMP biosynthesis; dUMP from dCTP (dUTP route): step 2/2. Its function is as follows. This enzyme is involved in nucleotide metabolism: it produces dUMP, the immediate precursor of thymidine nucleotides and it decreases the intracellular concentration of dUTP so that uracil cannot be incorporated into DNA. This Roseobacter denitrificans (strain ATCC 33942 / OCh 114) (Erythrobacter sp. (strain OCh 114)) protein is Deoxyuridine 5'-triphosphate nucleotidohydrolase.